The chain runs to 275 residues: Arylamine N-acetyltransferase (275 aa).

Cys70 serves as the catalytic Acyl-thioester intermediate. Residues His110 and Asp127 contribute to the active site.

This sequence belongs to the arylamine N-acetyltransferase family. In terms of assembly, homodimer and homotetramer.

The catalysed reaction is an arylamine + acetyl-CoA = an N-acetylarylamine + CoA. In terms of biological role, catalyzes the transfer of the acetyl group from acetyl coenzyme A to the free amino group of arylamines and hydrazines. Substrates include isoniazid, anisidine, and 4-aminoveratrole, and to a much lesser extent, p-aminobenzoic acid. This chain is Arylamine N-acetyltransferase, found in Mycolicibacterium smegmatis (Mycobacterium smegmatis).